A 160-amino-acid polypeptide reads, in one-letter code: Small ribosomal subunit protein uS7 (160 aa).

This sequence belongs to the universal ribosomal protein uS7 family. As to quaternary structure, part of the 30S ribosomal subunit. Contacts proteins S9 and S11.

Functionally, one of the primary rRNA binding proteins, it binds directly to 16S rRNA where it nucleates assembly of the head domain of the 30S subunit. Is located at the subunit interface close to the decoding center, probably blocks exit of the E-site tRNA. The polypeptide is Small ribosomal subunit protein uS7 (Ehrlichia canis (strain Jake)).